Reading from the N-terminus, the 302-residue chain is MTYPKRIPINAWSEVHRVARPLIITFDAYNTLYATKLPVMEQYCIVGRKYGIKANPSTLTNNFPHVFKKLKEDYPQYGKYSGIKPEQWWSILIRNVFAPNEIPDEMINEILMRFEGFDSYFVYPDLIKFLKDLKSRHPDVILGIVSNTDPIFYKLLKNIGLFETFSGHIYLSYELNLAKPDRAIFQYALDDIISKQPHLLEKYTREEILQHCFHIGDELKNDLEGAEAAGWTGILLDRNDKYGFLSNSISKPMRDEYKLSIDKIDNNSINTWEANTKQTDTLQLSERKYVVSNLEVLEELFP.

The protein belongs to the HAD-like hydrolase superfamily.

This is an uncharacterized protein from Saccharomyces cerevisiae (strain ATCC 204508 / S288c) (Baker's yeast).